Reading from the N-terminus, the 140-residue chain is HTH-type transcriptional regulator AdhR (140 aa).

The HTH merR-type domain occupies 1–69 (MNIAQVAKQF…IEALIEYTTL (69 aa)). A DNA-binding region (H-T-H motif) is located at residues 3–22 (IAQVAKQFGLTAATLRYYER). Residues 75–125 (RTVEARKNILADERQRLIEKRKEIDETIKRLDTKIKDYDGKLRENEAKLKS) adopt a coiled-coil conformation. Residues 120-140 (EAKLKSRPKTESLHGSVEQRR) are disordered.

In terms of biological role, transcriptional regulator involved in the response to aldehyde stress. Binds to the promoter region of the adhA-yraA operon, the yraC and its own promoter region; binding is unchanged in the presence of aldehydes. This is HTH-type transcriptional regulator AdhR (adhR) from Bacillus subtilis (strain 168).